The sequence spans 318 residues: 4-hydroxy-3-methylbut-2-enyl diphosphate reductase (318 aa).

Cys12 serves as a coordination point for [4Fe-4S] cluster. 2 residues coordinate (2E)-4-hydroxy-3-methylbut-2-enyl diphosphate: His41 and His74. His41 and His74 together coordinate dimethylallyl diphosphate. Isopentenyl diphosphate-binding residues include His41 and His74. Cys96 contacts [4Fe-4S] cluster. (2E)-4-hydroxy-3-methylbut-2-enyl diphosphate is bound at residue His124. His124 contacts dimethylallyl diphosphate. Residue His124 participates in isopentenyl diphosphate binding. Glu126 (proton donor) is an active-site residue. Thr167 provides a ligand contact to (2E)-4-hydroxy-3-methylbut-2-enyl diphosphate. Residue Cys197 participates in [4Fe-4S] cluster binding. (2E)-4-hydroxy-3-methylbut-2-enyl diphosphate contacts are provided by Ser225, Ser226, Asn227, and Ser269. Dimethylallyl diphosphate contacts are provided by Ser225, Ser226, Asn227, and Ser269. Residues Ser225, Ser226, Asn227, and Ser269 each contribute to the isopentenyl diphosphate site.

The protein belongs to the IspH family. The cofactor is [4Fe-4S] cluster.

It catalyses the reaction isopentenyl diphosphate + 2 oxidized [2Fe-2S]-[ferredoxin] + H2O = (2E)-4-hydroxy-3-methylbut-2-enyl diphosphate + 2 reduced [2Fe-2S]-[ferredoxin] + 2 H(+). The catalysed reaction is dimethylallyl diphosphate + 2 oxidized [2Fe-2S]-[ferredoxin] + H2O = (2E)-4-hydroxy-3-methylbut-2-enyl diphosphate + 2 reduced [2Fe-2S]-[ferredoxin] + 2 H(+). The protein operates within isoprenoid biosynthesis; dimethylallyl diphosphate biosynthesis; dimethylallyl diphosphate from (2E)-4-hydroxy-3-methylbutenyl diphosphate: step 1/1. It participates in isoprenoid biosynthesis; isopentenyl diphosphate biosynthesis via DXP pathway; isopentenyl diphosphate from 1-deoxy-D-xylulose 5-phosphate: step 6/6. Catalyzes the conversion of 1-hydroxy-2-methyl-2-(E)-butenyl 4-diphosphate (HMBPP) into a mixture of isopentenyl diphosphate (IPP) and dimethylallyl diphosphate (DMAPP). Acts in the terminal step of the DOXP/MEP pathway for isoprenoid precursor biosynthesis. The polypeptide is 4-hydroxy-3-methylbut-2-enyl diphosphate reductase (Francisella tularensis subsp. mediasiatica (strain FSC147)).